A 740-amino-acid polypeptide reads, in one-letter code: Cell death abnormality protein 12 (740 aa).

The ELMO domain occupies 348–494 (SEIQKVLDID…FVLEQLRHVL (147 aa)). The segment at 555 to 690 (INHLNYLKKG…ESLAYLVGNT (136 aa)) is required for punctate localization, cell corpse engulfment and distal cell tip migration. Positions 724 to 727 (PDVP) match the SH3-binding motif.

In terms of assembly, interacts with psr-1. Forms a ternary complex with ced-2 and ced-5.

The protein localises to the cytoplasm. Involved in apoptosis and necrosis. Required for the cell corpse engulfment process. Has roles in the formation of actin halos and distal tip cell migration. Plays no role in amphid axon outgrowth. This Caenorhabditis briggsae protein is Cell death abnormality protein 12.